The chain runs to 684 residues: Probable pectin methyltransferase QUA2 (684 aa).

The tract at residues 1–35 is disordered; sequence MSMPLQRGISGVRVSDSSDDLRDSQMKDKTERARS. The Cytoplasmic segment spans residues 1–86; that stretch reads MSMPLQRGIS…RHRLMLLFLK (86 aa). Residues 19 to 35 show a composition bias toward basic and acidic residues; sequence DDLRDSQMKDKTERARS. A helical; Signal-anchor for type II membrane protein membrane pass occupies residues 87-107; that stretch reads ISLVLIVVIALAGSFWWTISI. The Lumenal segment spans residues 108–684; sequence STSSRGHVYH…QKPFTKRQSI (577 aa). N-linked (GlcNAc...) asparagine glycans are attached at residues Asn161 and Asn476.

The protein belongs to the methyltransferase superfamily. As to expression, ubiquitous.

Its subcellular location is the golgi apparatus membrane. The protein operates within glycan metabolism; pectin biosynthesis. Its function is as follows. May be involved in the synthesis of homogalacturonan. Required for normal cell adhesion and plant development. The chain is Probable pectin methyltransferase QUA2 (QUA2) from Arabidopsis thaliana (Mouse-ear cress).